Here is a 280-residue protein sequence, read N- to C-terminus: Late embryogenesis abundant protein 76 (280 aa).

2 disordered regions span residues 1 to 156 (MASN…GEAV) and 220 to 241 (EEED…TDPT). Basic and acidic residues predominate over residues 28–39 (MRDKAEEGKDKT). LEA 11-mer repeat repeat units follow at residues 31 to 41 (KAEEGKDKTSQ), 53 to 63 (TAQAAKDKTSQ), 75 to 85 (TAQAAKDKTSQ), 97 to 107 (TAQAAKDKTSQ), and 119 to 129 (TTQSSKEKTSQ). Residues 40–114 (SQTAQKAQQK…TSQAAQTTQQ (75 aa)) are compositionally biased toward low complexity. Basic and acidic residues-rich tracts occupy residues 115–127 (KAHE…KEKT) and 136–145 (EKARETKDKT). The span at 230–239 (TTTCTTQSTD) shows a compositional bias: low complexity.

It belongs to the LEA type 4 family.

Lea proteins are late embryonic proteins abundant in higher plant seed embryos. This Brassica napus (Rape) protein is Late embryogenesis abundant protein 76.